The primary structure comprises 404 residues: O-antigen ligase (404 aa).

Helical transmembrane passes span 16–32 (IWNKALVFLFVATYFLD), 39–55 (HLIIILMVITAIYQVSR), 67–84 (SVFYSVAVLSLILVYSIL), 96–115 (FENTVLEGFLLYTLLIPVLL), 127–147 (VLFSFLTSLGLRCLAESILYI), 168–183 (SMVFLFPALLNIWLFR), 189–221 (LVFLVLSAIYLFFILGTLSRGAWLAVLIVGVLW), 228–246 (WKLIGVGAILLAIIGALVI), 324–343 (ILYIWFSAGILGLASLVYLY), 363–379 (YNAHLLLFLSFVGFYIV), and 385–401 (QVDIAQIGIITGFLLAL).

The protein belongs to the O-antigen ligase family.

The protein localises to the cell inner membrane. It carries out the reaction a lipid-linked O antigen + a lipid A-core oligosaccharide = a lipopolysaccharide + a polyisoprenyl diphosphate.. The protein operates within bacterial outer membrane biogenesis; lipopolysaccharide biosynthesis. Functionally, transferase involved in the biosynthesis of the lipopolysaccharide (LPS). Catalyzes the transfer of a polymerized O-antigen molecule from its polyprenyl diphosphate membrane anchor to a terminal sugar of the lipid A-core oligosaccharide, finalizing the biosynthesis of the lipopolysaccharide. May also be involved in a feedback mechanism to regulate O-unit synthesis, based on the availability of O units on the periplasmic face of the membrane. This chain is O-antigen ligase, found in Salmonella typhimurium (strain LT2 / SGSC1412 / ATCC 700720).